We begin with the raw amino-acid sequence, 507 residues long: Dolichyl pyrophosphate Man9GlcNAc2 alpha-1,3-glucosyltransferase (507 aa).

Residues 1–2 are Cytoplasmic-facing; the sequence is ME. Residues 3–23 form a helical membrane-spanning segment; that stretch reads SWPWMAVVVLLGLTVRWTVSL. The Lumenal segment spans residues 24 to 114; sequence SSYSGAGKPP…SQAHKLFMRA (91 aa). Asn59 is a glycosylation site (N-linked (GlcNAc...) asparagine). Residues 115-135 form a helical membrane-spanning segment; it reads TVLAADLLIYVPAVLLYCYSL. Residues 136 to 143 lie on the Cytoplasmic side of the membrane; sequence KEISPKRK. A helical membrane pass occupies residues 144–164; sequence IASALCILLYPGLILIDYGHF. Topologically, residues 165-172 are lumenal; sequence QYNSVSLG. The helical transmembrane segment at 173 to 193 threads the bilayer; the sequence is FALWGVLGVSWDWDLLGSLAF. Topologically, residues 194 to 229 are cytoplasmic; it reads CLALNYKQMELYHSLPFFCFLLGKCFKKGLKGKGLA. A helical membrane pass occupies residues 230-250; it reads LFIRIACTVLASFLLCWLPFL. At 251 to 297 the chain is on the lumenal side; that stretch reads TEREHALQVVRRLFPVDRGLFEDKVANIWCSVNVFLKIKDTLPRHIQ. A helical membrane pass occupies residues 298-318; that stretch reads IAISFCFTLLSLLPACIKLTV. Over 319-332 the chain is Cytoplasmic; the sequence is RPSCKGFRFTLVSC. The chain crosses the membrane as a helical span at residues 333 to 353; sequence ALSFFLFSFQVHEKSILLVSL. Topologically, residues 354–361 are lumenal; that stretch reads PVCLVLTE. The chain crosses the membrane as a helical span at residues 362–382; sequence IPFMSTWFLLVSTFSMLPLLL. The Cytoplasmic portion of the chain corresponds to 383-385; it reads KDE. The helical transmembrane segment at 386–406 threads the bilayer; it reads LLLPSVVTVMAFVIACGTFFP. The Lumenal segment spans residues 407 to 437; sequence MLENTSEEQLQLKSFAVSVRRHLPGFTFLPR. A helical membrane pass occupies residues 438-458; the sequence is IMQCLFLSSVITMVLLTILSV. Residues 459-468 are Cytoplasmic-facing; the sequence is TLDPPQKLPD. The chain crosses the membrane as a helical span at residues 469-489; it reads LFPVLICFVSCVNFVFFLVYF. Residues 490 to 507 are Lumenal-facing; that stretch reads NIVIMWDSKNGRNRKKIE.

Belongs to the ALG6/ALG8 glucosyltransferase family.

Its subcellular location is the endoplasmic reticulum membrane. It carries out the reaction an alpha-D-Man-(1-&gt;2)-alpha-D-Man-(1-&gt;2)-alpha-D-Man-(1-&gt;3)-[alpha-D-Man-(1-&gt;2)-alpha-D-Man-(1-&gt;3)-[alpha-D-Man-(1-&gt;2)-alpha-D-Man-(1-&gt;6)]-alpha-D-Man-(1-&gt;6)]-beta-D-Man-(1-&gt;4)-beta-D-GlcNAc-(1-&gt;4)-alpha-D-GlcNAc-diphospho-di-trans,poly-cis-dolichol + a di-trans,poly-cis-dolichyl beta-D-glucosyl phosphate = an alpha-D-Glc-(1-&gt;3)-alpha-D-Man-(1-&gt;2)-alpha-D-Man-(1-&gt;2)-alpha-D-Man-(1-&gt;3)-[alpha-D-Man-(1-&gt;2)-alpha-D-Man-(1-&gt;3)-[alpha-D-Man-(1-&gt;2)-alpha-D-Man-(1-&gt;6)]-alpha-D-Man-(1-&gt;6)]-beta-D-Man-(1-&gt;4)-beta-D-GlcNAc-(1-&gt;4)-alpha-D-GlcNAc-diphospho-di-trans,poly-cis-dolichol + a di-trans,poly-cis-dolichyl phosphate + H(+). It functions in the pathway protein modification; protein glycosylation. In terms of biological role, dolichyl pyrophosphate Man9GlcNAc2 alpha-1,3-glucosyltransferase that operates in the biosynthetic pathway of dolichol-linked oligosaccharides, the glycan precursors employed in protein asparagine (N)-glycosylation. The assembly of dolichol-linked oligosaccharides begins on the cytosolic side of the endoplasmic reticulum membrane and finishes in its lumen. The sequential addition of sugars to dolichol pyrophosphate produces dolichol-linked oligosaccharides containing fourteen sugars, including two GlcNAcs, nine mannoses and three glucoses. Once assembled, the oligosaccharide is transferred from the lipid to nascent proteins by oligosaccharyltransferases. In the lumen of the endoplasmic reticulum, adds the first glucose residue from dolichyl phosphate glucose (Dol-P-Glc) onto the lipid-linked oligosaccharide intermediate Man(9)GlcNAc(2)-PP-Dol to produce Glc(1)Man(9)GlcNAc(2)-PP-Dol. Glc(1)Man(9)GlcNAc(2)-PP-Dol is a substrate for ALG8, the following enzyme in the biosynthetic pathway. In Mus musculus (Mouse), this protein is Dolichyl pyrophosphate Man9GlcNAc2 alpha-1,3-glucosyltransferase.